Consider the following 370-residue polypeptide: 2-aminoethylphosphonate--pyruvate transaminase 2 (370 aa).

At Lys194 the chain carries N6-(pyridoxal phosphate)lysine.

The protein belongs to the class-V pyridoxal-phosphate-dependent aminotransferase family. PhnW subfamily. Homodimer. Pyridoxal 5'-phosphate serves as cofactor.

It carries out the reaction (2-aminoethyl)phosphonate + pyruvate = phosphonoacetaldehyde + L-alanine. Functionally, involved in phosphonate degradation. This is 2-aminoethylphosphonate--pyruvate transaminase 2 from Paraburkholderia xenovorans (strain LB400).